Reading from the N-terminus, the 102-residue chain is Hemoglobin subunit beta-Z (102 aa).

The Globin domain occupies phenylalanine 1–histidine 102. 2 residues coordinate heme b: histidine 19 and histidine 48.

Belongs to the globin family. Heterotetramer of two alpha chains and two beta chains.

Functionally, this is an embryonic beta chain. This is Hemoglobin subunit beta-Z (HBBZ) from Mesocricetus auratus (Golden hamster).